A 1392-amino-acid polypeptide reads, in one-letter code: FERM and PDZ domain-containing protein 2 (1392 aa).

The KIND domain maps to 15 to 197 (VTLASALQVR…SEVERRVVEE (183 aa)). The disordered stretch occupies residues 211–246 (SRLHQADGESPGAPASDALQPRRVSERSAETQSSLE). The FERM domain occupies 342–642 (CVVLLNGRCL…WFNAQTGSKH (301 aa)). Residues 775–861 (GLFGEPNQDI…MAVRMIQNSP (87 aa)) form the PDZ 1 domain. A disordered region spans residues 903–930 (GRQSPHIHDQDRSVRGTEMAQGAGSCPP). The span at 908-917 (HIHDQDRSVR) shows a compositional bias: basic and acidic residues. Residues 937–1027 (TGEIYFVELV…VARLVLERRG (91 aa)) are interaction with GRIN2A and GRIN2B. PDZ domains are found at residues 950–1035 (GTLG…PQCP) and 1079–1167 (RGLG…PEME). The disordered stretch occupies residues 1186–1236 (CAGSEQSPSLDQEDNWRDSTSLDAGEGLSPGPESSYKDVRQVKGDREKERP). Positions 1220 to 1236 (SYKDVRQVKGDREKERP) are enriched in basic and acidic residues.

In terms of assembly, interacts (via the second PDZ domain) with CTNND2 (via the extreme C-terminus). Interacts (via the second PDZ domain) with PKP4 (via the extreme C-terminus); the interaction directs FRMPD2 to the basolateral membranes. Interacts (via the second PDZ domain) with ARVCF (via the extreme C-terminus). Interacts (via the second PDZ domain) with NMDAR subunits GRIN2A/GLUN2A and GRIN2B/GLUN2B (via the extreme C-terminus); the interaction is direct and is likely to promote NMDAR-mediated neural signal transmission. Binds GRIN2A with lower affinity than GRIN2B. Interacts (via the third PDZ domain) with LRIT1 (via the extreme C-terminus); the interaction leads to their colocalization in photoreceptor synapses. Interacts with NOD2; the interaction is likely to trigger NOD2-mediated nuclear factor kappaB activation.

It is found in the cytoplasm. It localises to the postsynaptic density. The protein localises to the basolateral cell membrane. Its subcellular location is the cell junction. The protein resides in the tight junction. Its function is as follows. Functions as a scaffold protein and likely plays a role in N-methyl-D-aspartic acid receptor (NMDAR)-mediated synaptic excitatory transmission. May be involved in synapse formation in cone photoreceptor cells. May play a role in the regulation of tight junction formation. Binds phosphatidylinositol 3,4-bisphosphate (PtdIns(3,4)P2). May pNF-kappa-Blay a role in the regulation of NOD2-mediated NF-kappa-B activation in immune response. The polypeptide is FERM and PDZ domain-containing protein 2 (Mus musculus (Mouse)).